We begin with the raw amino-acid sequence, 173 residues long: CKLF-like MARVEL transmembrane domain-containing protein 8 (173 aa).

The MARVEL domain occupies 36–168; the sequence is FLRTLPGLLI…NTYFSFIAWR (133 aa). 4 helical membrane passes run 40–60, 70–90, 105–125, and 147–167; these read LPGL…TLIA, FGWV…FLII, TTVG…AAIV, and FFAF…FIAW.

This sequence belongs to the chemokine-like factor family.

It localises to the membrane. This chain is CKLF-like MARVEL transmembrane domain-containing protein 8 (CMTM8), found in Bos taurus (Bovine).